A 407-amino-acid chain; its full sequence is Putative nickel insertion protein (407 aa).

Belongs to the LarC family.

The sequence is that of Putative nickel insertion protein from Gloeothece citriformis (strain PCC 7424) (Cyanothece sp. (strain PCC 7424)).